A 1860-amino-acid polypeptide reads, in one-letter code: MVDKNIYIIQGEINIVVGAIKRNARWSTHTPLDEERDPLLHSFGHLKEVLNSITELSEIEPNVFLRPFLEVIRSEDTTGPITGLALTSVNKFLSYALIDPTHEGTAEGMENMADAVTHARFVGTDPASDEVVLMKILQVLRTLLLTPVGAHLTNESVCEIMQSCFRICFEMRLSELLRKSAEHTLVDMVQLLFTRLPQFKEEPKNYVGTNMKKLKMRAGGMSDSSKWKKQKRSPRPPRHMTKVTPGSELPTPNGTTLSSNLTGGMPFIDVPTPISSASSEAASAVVSPSTDSGLEFSSQTTSKEDLTDLEQPGSPGYSTATEPGSSELGVPEQPDLQQEGTHVEKSQSASVESIPEVLEECTSPADHSDSASVHDMDYVNPRGVRFTQSSQKEGTALVPYGLPCIRELFRFLISLTNPHDRHNSEVMIHMGLHLLTVALESAPVAQCQTLLGLIKDEMCRHLFQLLSIERLNLYAASLRVCFLLFESMREHLKFQMEMYIKKLMEIITVENPKMPYEMKEMALEAIVQLWRIPSFVTELYINYDCDYYCSNLFEELTKLLSKNAFPVSGQLYTTHLLSLDALLTVIDSTEAHCQAKVLNSLTQQEKKETARPSCEIVDGTREASNTERTASDGKAVGMASDIPGLHLPGGGRLPPEHGKSGCSDLEEAVDSGADKKFARKPPRFSCLLPDPRELIEIKNKKKLLITGTEQFNQKPKKGIQFLQEKGLLTIPMDNTEVAQWLRENPRLDKKMIGEFVSDRKNIDLLESFVSTFSFQGLRLDEALRLYLEAFRLPGEAPVIQRLLEAFTERWMNCNGSPFANSDACFSLAYAVIMLNTDQHNHNVRKQNAPMTLEEFRKNLKGVNGGKDFEQDILEDMYHAIKNEEIVMPEEQTGLVRENYVWNVLLHRGATPEGIFLRVPTASYDLDLFTMTWGPTIAALSYVFDKSLEETIIQKAISGFRKCAMISAHYGLSDVFDNLIISLCKFTALSSESIENLPSVFGSNPKAHIAAKTVFHLAHRHGDILREGWKNIMEAMLQLFRAQLLPKAMIEVEDFVDPNGKISLQREETPSNRGESTVLSFVSWLTLSGPEQSSVRGPSTENQEAKRVALECIKQCDPEKMITESKFLQLESLQELMKALVSVTPDEETYDEEDAAFCLEMLLRIVLENRDRVGCVWQTVRDHLYHLCVQAQDFCFLVERAVVGLLRLAIRLLRREEISAQVLLSLRILLLMKPSVLSRVSHQVAYGLHELLKTNAANIHSGDDWATLFTLLECIGSGVKPPAALQATARADAPDAGAQSDSELPSYHQNDVSLDRGYTSDSEVYTDHGRPGKIHRSATDADVVNSGWLVVGKDDVDNSKPGPSRPGPSPLINQYSLTVGLDLGPHDTKSLLKCVESLSFIVRDAAHITPDNFELCVKTLRIFVEASLNGGCKSQEKRGKSHKYDSKGNRFKKKSKEGSMLRRPRTSSQHASRGGQSDDDEDEGVPASYHTVSLQVSQDLLDLMHTLHTRAASIYSSWAEEQRHLETGGQKIEADSRTLWAHCWCPLLQGIACLCCDARRQVRMQALTYLQRALLVHDLQKLDALEWESCFNKVLFPLLTKLLENISPADVGGMEETRMRASTLLSKVFLQHLSPLLSLSTFAALWLTILDFMDKYMHAGSSDLLSEAIPESLKNMLLVMDTAEIFHSADARGGGPSALWEITWERIDCFLPHLRDELFKQTVIQDPMPMEPQGQKPLASAHLTSAAGDTRTPGHPPPPEIPSELGACDFEKPESPRAASSSSPGSPVASSPSRLSPTPDGPPPLAQPPLILQPLASPLQVGVPPMTLPIILNPALIEATSPVPLLATPRPTDPIPTSEVN.

Residues 1-211 (MVDKNIYIIQ…EPKNYVGTNM (211 aa)) form a DCB; DCB:DCB domain and DCB:HUS domain interaction region. Residues 1–381 (MVDKNIYIIQ…SVHDMDYVNP (381 aa)) form an interaction with RAB1B region. Disordered regions lie at residues 215 to 266 (KMRA…GGMP) and 281 to 372 (AASA…DSAS). A compositionally biased stretch (basic residues) spans 227-241 (WKKQKRSPRPPRHMT). Polar residues-rich tracts occupy residues 250–262 (PTPN…SNLT), 290–301 (TDSGLEFSSQTT), and 335–351 (DLQQ…SASV). Phosphoserine occurs at positions 350 and 353. A Phosphothreonine modification is found at T508. Residues 531–551 (RIPSFVTELYINYDCDYYCSN) form an HUS; DCB:HUS domain interaction region. The segment covering 620–631 (TREASNTERTAS) has biased composition (basic and acidic residues). Residues 620–666 (TREASNTERTASDGKAVGMASDIPGLHLPGGGRLPPEHGKSGCSDLE) form a disordered region. Position 663 is a phosphoserine (S663). The region spanning 693 to 883 (ELIEIKNKKK…EDMYHAIKNE (191 aa)) is the SEC7 domain. Positions 887–1371 (MPEEQTGLVR…PSRPGPSPLI (485 aa)) are phosphatidylinositol-phosphate binding; required for translocation to the leading edge and for ARF1 activation upon GPCR signaling. Over residues 1285 to 1297 (QATARADAPDAGA) the composition is skewed to low complexity. The segment at 1285–1336 (QATARADAPDAGAQSDSELPSYHQNDVSLDRGYTSDSEVYTDHGRPGKIHRS) is disordered. Positions 1298–1311 (QSDSELPSYHQNDV) are enriched in polar residues. S1299 is subject to Phosphoserine. At Y1317 the chain carries Phosphotyrosine. Phosphoserine is present on residues S1319, S1321, and S1336. At T1338 the chain carries Phosphothreonine; by AMPK. 3 disordered regions span residues 1351–1371 (GKDD…SPLI), 1431–1484 (CKSQ…DEGV), and 1726–1809 (PMPM…QPPL). Residues 1433–1447 (SQEKRGKSHKYDSKG) are compositionally biased toward basic and acidic residues. Over residues 1465 to 1474 (TSSQHASRGG) the composition is skewed to polar residues. A phosphoserine mark is found at S1476, S1774, and S1785. Residues 1775 to 1792 (PRAASSSSPGSPVASSPS) show a composition bias toward low complexity.

Can form homodimers and probably homotetramers. Interacts with COPG1; the interaction is independent of ARF1 activation. Interacts with ARF1, ARF3, ARF4 and ARF5. Interacts with RAB1B (GTP-bound form); required for GBF1 membrane association. Interacts with GGA1, GGA2 and GGA3. Interacts with USO1. Interacts (via SEC7 domain) with PNPLA2 (via C-terminus); the interaction is direct. Interacts with ARMH3. In terms of assembly, (Microbial infection) Interacts with poliovirus protein 3A. AMPK-mediated phosphorylation at Thr-1338 is induced by 2-deoxyglucose (2-DG) and AICA ribonucleotide, and occurs during mitosis leading to membrane disassociation and inactivation of ARF1 during mitosis. In terms of tissue distribution, ubiquitous.

Its subcellular location is the golgi apparatus. It is found in the cis-Golgi network. It localises to the endoplasmic reticulum-Golgi intermediate compartment. The protein resides in the trans-Golgi network. The protein localises to the cytoplasm. Its subcellular location is the lipid droplet. It is found in the membrane. With respect to regulation, inhibited by brefeldin A (BFA). Inhibited by golgicide A (GCA). Guanine-nucleotide exchange factor (GEF) for members of the Arf family of small GTPases involved in trafficking in the early secretory pathway; its GEF activity initiates the coating of nascent vesicles via the localized generation of activated ARFs through replacement of GDP with GTP. Recruitment to cis-Golgi membranes requires membrane association of Arf-GDP and can be regulated by ARF1, ARF3, ARF4 and ARF5. Involved in the recruitment of the COPI coat complex to the endoplasmic reticulum exit sites (ERES), and the endoplasmic reticulum-Golgi intermediate (ERGIC) and cis-Golgi compartments which implicates ARF1 activation. Involved in COPI vesicle-dependent retrograde transport from the ERGIC and cis-Golgi compartments to the endoplasmic reticulum (ER). Involved in the trans-Golgi network recruitment of GGA1, GGA2, GGA3, BIG1, BIG2, and the AP-1 adaptor protein complex related to chlathrin-dependent transport; the function requires its GEF activity (probably at least in part on ARF4 and ARF5). Has GEF activity towards ARF1. Has in vitro GEF activity towards ARF5. Involved in the processing of PSAP. Required for the assembly of the Golgi apparatus. The AMPK-phosphorylated form is involved in Golgi disassembly during mitotis and under stress conditions. May be involved in the COPI vesicle-dependent recruitment of PNPLA2 to lipid droplets; however, this function is under debate. In neutrophils, involved in G protein-coupled receptor (GPCR)-mediated chemotaxis und superoxide production. Proposed to be recruited by phosphatidylinositol-phosphates generated upon GPCR stimulation to the leading edge where it recruits and activates ARF1, and is involved in recruitment of GIT2 and the NADPH oxidase complex. Plays a role in maintaining mitochondrial morphology. This chain is Golgi-specific brefeldin A-resistance guanine nucleotide exchange factor 1 (GBF1), found in Homo sapiens (Human).